The chain runs to 357 residues: D-alanine--D-alanine ligase A (357 aa).

The ATP-grasp domain occupies 143–348 (KRLLREAGLA…YSKVIDVLIE (206 aa)). 171-226 (AGALGLPFFAKPARQGSSFGVSKVHDRDGFEQAVETALRYDSKALIEEFVDGREIE) provides a ligand contact to ATP. Mg(2+) contacts are provided by aspartate 302, glutamate 315, and asparagine 317.

The protein belongs to the D-alanine--D-alanine ligase family. The cofactor is Mg(2+). It depends on Mn(2+) as a cofactor.

The protein localises to the cytoplasm. It carries out the reaction 2 D-alanine + ATP = D-alanyl-D-alanine + ADP + phosphate + H(+). It participates in cell wall biogenesis; peptidoglycan biosynthesis. In terms of biological role, cell wall formation. In Mesorhizobium japonicum (strain LMG 29417 / CECT 9101 / MAFF 303099) (Mesorhizobium loti (strain MAFF 303099)), this protein is D-alanine--D-alanine ligase A.